We begin with the raw amino-acid sequence, 203 residues long: Glycerol-3-phosphate acyltransferase (203 aa).

4 helical membrane-spanning segments follow: residues 1-21, 84-104, 117-137, and 157-179; these read MIQT…LGAI, WLQV…VWLG, IFLG…MAVI, and LMLL…LMVL.

It belongs to the PlsY family. In terms of assembly, probably interacts with PlsX.

It is found in the cell inner membrane. The enzyme catalyses an acyl phosphate + sn-glycerol 3-phosphate = a 1-acyl-sn-glycero-3-phosphate + phosphate. Its pathway is lipid metabolism; phospholipid metabolism. In terms of biological role, catalyzes the transfer of an acyl group from acyl-phosphate (acyl-PO(4)) to glycerol-3-phosphate (G3P) to form lysophosphatidic acid (LPA). This enzyme utilizes acyl-phosphate as fatty acyl donor, but not acyl-CoA or acyl-ACP. The protein is Glycerol-3-phosphate acyltransferase of Synechococcus sp. (strain CC9605).